Here is a 303-residue protein sequence, read N- to C-terminus: Taste receptor type 2 member 13 (303 aa).

Over 1–7 (MESALPS) the chain is Extracellular. A helical membrane pass occupies residues 8 to 28 (IFTLVIIAEFIIGNLSNGFIV). At 29–55 (LINCIDWVSKRELSSVDKLLIILAISR) the chain is on the cytoplasmic side. The chain crosses the membrane as a helical span at residues 56–76 (IGLIWEILVSWFLALHSLAIF). Over 77–85 (VSGTGLRIM) the chain is Extracellular. The chain crosses the membrane as a helical span at residues 86–106 (IFSWIVSNHFNLWLATILSIF). Over 107–128 (YLLKIASFSSPAFLYLKRRVNK) the chain is Cytoplasmic. Residues 129 to 149 (VILMILLGTLVFLFLNLIQIN) form a helical membrane-spanning segment. The Extracellular portion of the chain corresponds to 150–184 (MLIKDWLDRYERNTTWNFSMSDFETFSVSVRFTMT). N-linked (GlcNAc...) asparagine glycosylation is found at Asn162 and Asn166. The helical transmembrane segment at 185–205 (MFSLTPFTVAFISFLLLVFSL) threads the bilayer. Residues 206–232 (QKHLQKMQLNYKGHRDPRTKVHTNALK) lie on the Cytoplasmic side of the membrane. The chain crosses the membrane as a helical span at residues 233–253 (IVISFLLLYASFFLSILISWI). Over 254-261 (SELYQNTV) the chain is Extracellular. The chain crosses the membrane as a helical span at residues 262-282 (IYMLCETIGAFYPSSHSFLLI). Residues 283–303 (LGNAKLRQAFLLVAAKVWAKR) are Cytoplasmic-facing.

It belongs to the G-protein coupled receptor T2R family.

It is found in the membrane. Functionally, receptor that may play a role in the perception of bitterness and is gustducin-linked. May play a role in sensing the chemical composition of the gastrointestinal content. The activity of this receptor may stimulate alpha gustducin, mediate PLC-beta-2 activation and lead to the gating of TRPM5. The protein is Taste receptor type 2 member 13 (TAS2R13) of Pan troglodytes (Chimpanzee).